A 271-amino-acid chain; its full sequence is Protein CDV3 homolog (271 aa).

Residues 37-47 show a composition bias toward basic and acidic residues; sequence KREVVKPKKPE. Disordered regions lie at residues 37–151 and 186–271; these read KREV…GHGP and SQQA…DEAS. The span at 48–61 shows a compositional bias: low complexity; sequence VAAGGVAVVGENEN. Residues 73-82 show a composition bias toward acidic residues; it reads VEEEWKEFEE. Over residues 95–114 the composition is skewed to polar residues; that stretch reads QLSTISSARSRTAQESSESQ. S134 bears the Phosphoserine mark. Positions 224–242 are enriched in basic and acidic residues; that stretch reads RPEEQRKKKNEPAFEEVRH.

This sequence belongs to the CDV3 family.

The sequence is that of Protein CDV3 homolog from Drosophila melanogaster (Fruit fly).